The sequence spans 200 residues: Probable nicotinate-nucleotide adenylyltransferase (200 aa).

The protein belongs to the NadD family.

The catalysed reaction is nicotinate beta-D-ribonucleotide + ATP + H(+) = deamido-NAD(+) + diphosphate. It functions in the pathway cofactor biosynthesis; NAD(+) biosynthesis; deamido-NAD(+) from nicotinate D-ribonucleotide: step 1/1. In terms of biological role, catalyzes the reversible adenylation of nicotinate mononucleotide (NaMN) to nicotinic acid adenine dinucleotide (NaAD). This chain is Probable nicotinate-nucleotide adenylyltransferase, found in Clostridium tetani (strain Massachusetts / E88).